The following is a 750-amino-acid chain: Circadian input-output histidine kinase CikA (750 aa).

The segment at 1-173 (MLPAFSPIFR…QVIAQIRQSL (173 aa)) is N-terminal domain. Residues 174 to 333 (DLSEILNNAV…KNFLGQIGEH (160 aa)) form a GAF domain region. The Histidine kinase domain maps to 385–609 (NISHELRTPL…IFTTVIPQQN (225 aa)). H388 is modified (phosphohistidine; by autocatalysis). A psR domain, bind KaiB(fs) region spans residues 604–750 (VIPQQNFPPT…VQSIQQEPLR (147 aa)). Residues 631 to 745 (SVIVIEQDEE…LLLQRVQSIQ (115 aa)) form the Response regulatory domain. D680 is modified (4-aspartylphosphate).

The protein in the N-terminal section; belongs to the phytochrome family. In terms of assembly, homodimer. Part of the circadian clock (KaiA, KaiB, KaiC, CikA, RpaA, SasA), the composition of which varies during the circadian cycle. KaiA and CikA compete for binding to KaiB(fs). Interacts with RpaA.

The catalysed reaction is ATP + protein L-histidine = ADP + protein N-phospho-L-histidine.. Its function is as follows. Functions in an input pathway to the Kai circadian clock. Senses oxidized quinones via its C-terminal pseudo-receiver domain, providing a link between cell metabolism and the clock. Affects the ratio of phosphorylated to unphosphorylated KaiC, binds quinones via its pseudo-receptor domain. Quinone-binding destabilizes the protein rapidly. Autophosphorylates, does not transfer the phosphate to its pseudo-receiver (PsR) domain. May play a role in cell division. In terms of biological role, also functions in a two-component CikA/RpaA output pathway from the circadian clock, negatively regulating kaiBC expression independently of labA and of sasA. One of three clock output pathways. Dephosphorylates phospho-RpaA, enhanced by KaiB and KaiC, has only modest kinase activity on RpaA. This Synechocystis sp. (strain ATCC 27184 / PCC 6803 / Kazusa) protein is Circadian input-output histidine kinase CikA.